The primary structure comprises 1071 residues: Intracellular phospholipase A2 (1071 aa).

Positions 1–22 (MTTTNKDGPFRQQYLPGVHKEP) are disordered. 7 ANK repeats span residues 411-440 (ENCY…TLFC), 479-508 (DGQS…KFTR), 510-539 (DRNE…EIAN), 544-570 (LGNS…ELGL), 578-610 (AGET…NMNA), 614-651 (HGNT…KINL), and 652-681 (RGES…TRCP). Residues 748-921 (ISMDGGGIRG…ISNNPALDLM (174 aa)) enclose the PNPLA domain. Residues 752–757 (GGGIRG) carry the GXGXXG motif. Residues 784–788 (GTSTG) carry the GXSXG motif. S786 acts as the Nucleophile in catalysis. D908 serves as the catalytic Proton acceptor. Positions 908–910 (DGG) match the DGA/G motif.

The protein belongs to the patatin family.

The enzyme catalyses a 1,2-diacyl-sn-glycero-3-phosphocholine + H2O = a 1-acyl-sn-glycero-3-phosphocholine + a fatty acid + H(+). Functionally, phospholipase that plays a critical role during oogenesis, ovulation, and/or embryogenesis. This Caenorhabditis elegans protein is Intracellular phospholipase A2.